The following is a 971-amino-acid chain: Endoplasmic reticulum calcium ATPase srcA (971 aa).

Residues 1–25 (MNNEALAEDPPTPLWELVLEQFKDQ) lie on the Cytoplasmic side of the membrane. The helical transmembrane segment at 26–46 (LVLILLGSAAVSFVLALFEEG) threads the bilayer. At 47 to 49 (DDW) the chain is on the lumenal side. A helical membrane pass occupies residues 50–70 (TAFVDPVVILTILILNAVVGV). Over 71-217 (TQESSAEKAI…PTPLKQKLND (147 aa)) the chain is Cytoplasmic. Residues 218 to 238 (FGDMLAKVITVICVLVWLINV) traverse the membrane as a helical segment. Residues 239–262 (EHFNDPAHGGWAKGAIYYLKIAVS) are Lumenal-facing. The helical transmembrane segment at 263–283 (LGVAAIPEGLAVVITTCLALG) threads the bilayer. Residues valine 265, alanine 266, isoleucine 268, and glutamate 270 each contribute to the Ca(2+) site. Over 284-718 (TRKMAAKNAV…GRSIYSNTQQ (435 aa)) the chain is Cytoplasmic. Aspartate 312 functions as the 4-aspartylphosphate intermediate in the catalytic mechanism. Mg(2+) is bound by residues aspartate 312 and threonine 314. ATP contacts are provided by threonine 314, glutamate 402, arginine 453, lysine 473, arginine 518, arginine 637, and lysine 643. Aspartate 662 serves as a coordination point for Mg(2+). Residue asparagine 665 coordinates ATP. The chain crosses the membrane as a helical span at residues 719 to 741 (FIRYLISSNIGEVVSIFLTAALG). Residues asparagine 727 and glutamate 730 each contribute to the Ca(2+) site. The Lumenal segment spans residues 742-750 (MPEALIPVQ). A helical transmembrane segment spans residues 751–770 (LLWVNLVTDGLPATALSFNP). The Ca(2+) site is built by asparagine 755, threonine 758, and aspartate 759. Residues 771-795 (PDHDVMRRAPRKRDEPLVGGWLLFR) are Cytoplasmic-facing. A helical membrane pass occupies residues 796–816 (YLAIGTYVGAATVFGYIWWFV). Residues 817–854 (YNPEGPQISFWQLSHFHKCSAQFPEIGCEMFSNEMSRS) lie on the Lumenal side of the membrane. Residues 855-875 (ASTVSLSILVVIEMLNAMNAL) form a helical membrane-spanning segment. Ca(2+) is bound at residue glutamate 867. The Cytoplasmic segment spans residues 876–891 (SSSESLLAFPLWNNMM). The chain crosses the membrane as a helical span at residues 892–912 (LVYAIILSMTLHFAILYIPFL). Residues 913–917 (QTLFS) are Lumenal-facing. Residues 918–938 (ILPLNWTEWKAVLAISAPVVA) traverse the membrane as a helical segment. Over 939 to 971 (IDELLKYAERRLYTLPAIAGEQQNGVAFKPKKA) the chain is Cytoplasmic.

This sequence belongs to the cation transport ATPase (P-type) (TC 3.A.3) family. Mg(2+) is required as a cofactor.

It localises to the endoplasmic reticulum membrane. The catalysed reaction is Ca(2+)(in) + ATP + H2O = Ca(2+)(out) + ADP + phosphate + H(+). In terms of biological role, magnesium-dependent enzyme catalyzes the hydrolysis of ATP coupled with the translocation of calcium from the cytosol to the endoplasmic reticulum lumen. Its activity is coupled to the unfolded protein response (UPR) and Ca(2+) import into the endoplasmioc reticulum is important for redox homeostasis, virulence, cell wall biosynthesis, and resistance to antifungal compounds that inhibit Ca2+ signaling. With pmrA, promotes radial growth and conidiation. In Aspergillus fumigatus (strain ATCC MYA-4609 / CBS 101355 / FGSC A1100 / Af293) (Neosartorya fumigata), this protein is Endoplasmic reticulum calcium ATPase srcA (srcA).